The chain runs to 926 residues: Transcriptional activator protein acu-15 (926 aa).

Residues 24–51 (CDRCRSKKIRCDGIRPCCSQCANVGFEC) constitute a DNA-binding region (zn(2)-C6 fungal-type). 3 disordered regions span residues 100 to 129 (KMHSNRSRSAEPPRSTPAAEIKRDSGTPAK), 602 to 649 (LPQS…SASL), and 667 to 801 (TPQH…TSTG). Basic and acidic residues predominate over residues 119 to 129 (EIKRDSGTPAK). Low complexity-rich tracts occupy residues 623-632 (AQQGSPSPSA) and 669-681 (QHQQYQHQQLQQQ). Composition is skewed to polar residues over residues 689–703 (ARSQTSFDNLRQKAQ) and 726–736 (RTSTGTQSTPN). A compositionally biased stretch (low complexity) spans 740–792 (LSLSSPQSPVSPVQMRSQPHQLQQQQQQQPQPQQQQQQHQRSSIASSHSQQGQ).

It is found in the nucleus. Its function is as follows. Positive regulator of acetate induction. This Neurospora crassa (strain ATCC 24698 / 74-OR23-1A / CBS 708.71 / DSM 1257 / FGSC 987) protein is Transcriptional activator protein acu-15 (acu-15).